Reading from the N-terminus, the 568-residue chain is Proline--tRNA ligase (568 aa).

Belongs to the class-II aminoacyl-tRNA synthetase family. ProS type 1 subfamily. As to quaternary structure, homodimer.

It localises to the cytoplasm. It catalyses the reaction tRNA(Pro) + L-proline + ATP = L-prolyl-tRNA(Pro) + AMP + diphosphate. Catalyzes the attachment of proline to tRNA(Pro) in a two-step reaction: proline is first activated by ATP to form Pro-AMP and then transferred to the acceptor end of tRNA(Pro). As ProRS can inadvertently accommodate and process non-cognate amino acids such as alanine and cysteine, to avoid such errors it has two additional distinct editing activities against alanine. One activity is designated as 'pretransfer' editing and involves the tRNA(Pro)-independent hydrolysis of activated Ala-AMP. The other activity is designated 'posttransfer' editing and involves deacylation of mischarged Ala-tRNA(Pro). The misacylated Cys-tRNA(Pro) is not edited by ProRS. This is Proline--tRNA ligase from Chromobacterium violaceum (strain ATCC 12472 / DSM 30191 / JCM 1249 / CCUG 213 / NBRC 12614 / NCIMB 9131 / NCTC 9757 / MK).